The chain runs to 179 residues: Inner membrane-spanning protein YciB (179 aa).

5 consecutive transmembrane segments (helical) span residues 22–42 (IYAATAALIVATAIVLIYSWV), 50–70 (MALITFVLVVVFGGLTLFFHN), 76–96 (WKVTVIYALFAGALLVSQWVM), 121–141 (LAWAVFFILCGLANIYIAFWL), and 149–169 (FKVFGLTALTLIFTLLSGIYI).

Belongs to the YciB family.

It localises to the cell inner membrane. In terms of biological role, plays a role in cell envelope biogenesis, maintenance of cell envelope integrity and membrane homeostasis. The protein is Inner membrane-spanning protein YciB of Shigella boydii serotype 4 (strain Sb227).